The following is a 445-amino-acid chain: Histidinol dehydrogenase (445 aa).

Positions 138, 199, and 222 each coordinate NAD(+). Substrate-binding residues include Ser-245, Gln-267, and His-270. Positions 267 and 270 each coordinate Zn(2+). Residues Glu-335 and His-336 each act as proton acceptor in the active site. Residues His-336, Asp-369, Glu-423, and His-428 each contribute to the substrate site. Asp-369 is a binding site for Zn(2+). A Zn(2+)-binding site is contributed by His-428.

Belongs to the histidinol dehydrogenase family. The cofactor is Zn(2+).

The enzyme catalyses L-histidinol + 2 NAD(+) + H2O = L-histidine + 2 NADH + 3 H(+). It participates in amino-acid biosynthesis; L-histidine biosynthesis; L-histidine from 5-phospho-alpha-D-ribose 1-diphosphate: step 9/9. Catalyzes the sequential NAD-dependent oxidations of L-histidinol to L-histidinaldehyde and then to L-histidine. The chain is Histidinol dehydrogenase from Burkholderia pseudomallei (strain 1710b).